The chain runs to 405 residues: Polyadenylate-binding protein RBP45B (405 aa).

A compositionally biased stretch (pro residues) spans 1 to 19 (MMQQPPPGGILPHHAPPPS). A disordered region spans residues 1 to 54 (MMQQPPPGGILPHHAPPPSAQQQYGYQQPYGIAGAAPPPPQMWNPQAAAPPSVQ). Positions 20–35 (AQQQYGYQQPYGIAGA) are enriched in low complexity. RRM domains follow at residues 62–143 (RTLW…WASL), 155–234 (YTIF…PAAS), and 261–333 (TTVF…WGRS). A disordered region spans residues 379–405 (GGYQQTPQAGQQPPQQPPQQQQVGFSY). A compositionally biased stretch (low complexity) spans 380 to 405 (GYQQTPQAGQQPPQQPPQQQQVGFSY).

This sequence belongs to the polyadenylate-binding RBP45 family. Both isoform 1 and isoform 2 interact with poly(A)+ RNA in nucleus. Expressed in roots, leaves, stems, flowers, siliques, and seedlings. Present in immature anther tissues (tapetum cells) and mature pollen grains.

It localises to the nucleus. Heterogeneous nuclear ribonucleoprotein (hnRNP)-protein binding the poly(A) tail of mRNA and probably involved in some steps of pre-mRNA maturation. The polypeptide is Polyadenylate-binding protein RBP45B (RBP45B) (Arabidopsis thaliana (Mouse-ear cress)).